The following is a 133-amino-acid chain: Putative pre-16S rRNA nuclease (133 aa).

Belongs to the YqgF nuclease family.

Its subcellular location is the cytoplasm. Could be a nuclease involved in processing of the 5'-end of pre-16S rRNA. This Bordetella pertussis (strain Tohama I / ATCC BAA-589 / NCTC 13251) protein is Putative pre-16S rRNA nuclease.